We begin with the raw amino-acid sequence, 1091 residues long: Voltage-dependent calcium channel subunit alpha-2/delta-1 (1091 aa).

The signal sequence occupies residues 1–24; the sequence is MAAGCLLALTLTLFQSWLIGPSSE. The Extracellular segment spans residues 25–1061; sequence EPFPSPVTIK…VLEDYTDCGG (1037 aa). N92 is a glycosylation site (N-linked (GlcNAc...) asparagine). S119 is modified (phosphoserine). N-linked (GlcNAc...) asparagine glycosylation is found at N136 and N184. One can recognise a VWFA domain in the interval 252 to 429; the sequence is DMLILVDVSG…INTQEYLDVL (178 aa). D258, S260, and S262 together coordinate a divalent metal cation. The MIDAS-like motif signature appears at 258–262; sequence DVSGS. 2 N-linked (GlcNAc...) asparagine glycosylation sites follow: N323 and N347. C403 and C1047 are disulfide-bonded. In terms of domain architecture, Cache spans 445 to 536; it reads WTNVYLDALE…QPKNPKSQEP (92 aa). N-linked (GlcNAc...) asparagine glycosylation is found at N593, N769, N876, and N973. A helical transmembrane segment spans residues 1062–1082; the sequence is VSGLNPSLWSIFGLQFILLWL. Over 1083 to 1091 the chain is Cytoplasmic; that stretch reads VSGSRHYLW.

This sequence belongs to the calcium channel subunit alpha-2/delta family. Dimer formed of alpha-2-1 and delta-1 chains; disulfide-linked. Voltage-dependent calcium channels are multisubunit complexes, consisting of alpha-1 (CACNA1), alpha-2 (CACNA2D), beta (CACNB) and delta (CACNA2D) subunits in a 1:1:1:1 ratio. Post-translationally, proteolytically processed into subunits alpha-2-1 and delta-1 that are disulfide-linked.

It is found in the membrane. The protein resides in the cell membrane. In terms of biological role, the alpha-2/delta subunit of voltage-dependent calcium channels regulates calcium current density and activation/inactivation kinetics of the calcium channel. Plays an important role in excitation-contraction coupling. The sequence is that of Voltage-dependent calcium channel subunit alpha-2/delta-1 (Cacna2d1) from Rattus norvegicus (Rat).